Consider the following 740-residue polypeptide: Ribosome-releasing factor 2, mitochondrial (740 aa).

The N-terminal 29 residues, 1–29 (MLKYAWQSGPKQSNRWLWHLSNQIWKRSY), are a transit peptide targeting the mitochondrion. The region spanning 31–310 (SKIRNIGILA…AVNAYLPAPE (280 aa)) is the tr-type G domain. Residues 40 to 47 (AHIDAGKT), 104 to 108 (DTPGH), and 158 to 161 (NKMD) contribute to the GTP site.

Belongs to the TRAFAC class translation factor GTPase superfamily. Classic translation factor GTPase family. EF-G/EF-2 subfamily.

It localises to the mitochondrion. Functionally, mitochondrial GTPase that mediates the disassembly of ribosomes from messenger RNA at the termination of mitochondrial protein biosynthesis. Not involved in the GTP-dependent ribosomal translocation step during translation elongation. This chain is Ribosome-releasing factor 2, mitochondrial, found in Drosophila melanogaster (Fruit fly).